The primary structure comprises 1109 residues: Protein translocase subunit SecA (1109 aa).

Residues Q175, 193–197 (GEGKT), and D695 each bind ATP. A disordered region spans residues 1038-1109 (VRQAAPEQRQ…KYKNCHGRNS (72 aa)). Basic and acidic residues-rich tracts occupy residues 1045–1059 (QRQD…KQDL) and 1071–1088 (DTRE…KTVG). 4 residues coordinate Zn(2+): C1093, C1095, C1104, and H1105. Basic residues predominate over residues 1099–1109 (KKYKNCHGRNS).

This sequence belongs to the SecA family. Monomer and homodimer. Part of the essential Sec protein translocation apparatus which comprises SecA, SecYEG and auxiliary proteins SecDF. Other proteins may also be involved. Zn(2+) serves as cofactor.

It is found in the cell inner membrane. The protein localises to the cytoplasm. The catalysed reaction is ATP + H2O + cellular proteinSide 1 = ADP + phosphate + cellular proteinSide 2.. In terms of biological role, part of the Sec protein translocase complex. Interacts with the SecYEG preprotein conducting channel. Has a central role in coupling the hydrolysis of ATP to the transfer of proteins into and across the cell membrane, serving as an ATP-driven molecular motor driving the stepwise translocation of polypeptide chains across the membrane. The chain is Protein translocase subunit SecA from Bacteroides fragilis (strain ATCC 25285 / DSM 2151 / CCUG 4856 / JCM 11019 / LMG 10263 / NCTC 9343 / Onslow / VPI 2553 / EN-2).